The chain runs to 316 residues: Thymidylate synthase (316 aa).

DUMP contacts are provided by residues R23 and 178-179 (RR). The active-site Nucleophile is the C198. Residues 218–221 (RSGD), N229, and 259–261 (HIY) each bind dUMP. (6R)-5,10-methylene-5,6,7,8-tetrahydrofolate is bound at residue D221. A315 provides a ligand contact to (6R)-5,10-methylene-5,6,7,8-tetrahydrofolate.

Belongs to the thymidylate synthase family. Bacterial-type ThyA subfamily. In terms of assembly, homodimer.

The protein localises to the cytoplasm. The catalysed reaction is dUMP + (6R)-5,10-methylene-5,6,7,8-tetrahydrofolate = 7,8-dihydrofolate + dTMP. Its pathway is pyrimidine metabolism; dTTP biosynthesis. Its function is as follows. Catalyzes the reductive methylation of 2'-deoxyuridine-5'-monophosphate (dUMP) to 2'-deoxythymidine-5'-monophosphate (dTMP) while utilizing 5,10-methylenetetrahydrofolate (mTHF) as the methyl donor and reductant in the reaction, yielding dihydrofolate (DHF) as a by-product. This enzymatic reaction provides an intracellular de novo source of dTMP, an essential precursor for DNA biosynthesis. The chain is Thymidylate synthase from Pediococcus pentosaceus (strain ATCC 25745 / CCUG 21536 / LMG 10740 / 183-1w).